The chain runs to 359 residues: UDP-N-acetylglucosamine--N-acetylmuramyl-(pentapeptide) pyrophosphoryl-undecaprenol N-acetylglucosamine transferase (359 aa).

Residues 14-16 (TGG), N126, R166, S194, I248, and Q293 contribute to the UDP-N-acetyl-alpha-D-glucosamine site.

This sequence belongs to the glycosyltransferase 28 family. MurG subfamily.

It localises to the cell inner membrane. It catalyses the reaction di-trans,octa-cis-undecaprenyl diphospho-N-acetyl-alpha-D-muramoyl-L-alanyl-D-glutamyl-meso-2,6-diaminopimeloyl-D-alanyl-D-alanine + UDP-N-acetyl-alpha-D-glucosamine = di-trans,octa-cis-undecaprenyl diphospho-[N-acetyl-alpha-D-glucosaminyl-(1-&gt;4)]-N-acetyl-alpha-D-muramoyl-L-alanyl-D-glutamyl-meso-2,6-diaminopimeloyl-D-alanyl-D-alanine + UDP + H(+). It participates in cell wall biogenesis; peptidoglycan biosynthesis. Cell wall formation. Catalyzes the transfer of a GlcNAc subunit on undecaprenyl-pyrophosphoryl-MurNAc-pentapeptide (lipid intermediate I) to form undecaprenyl-pyrophosphoryl-MurNAc-(pentapeptide)GlcNAc (lipid intermediate II). The chain is UDP-N-acetylglucosamine--N-acetylmuramyl-(pentapeptide) pyrophosphoryl-undecaprenol N-acetylglucosamine transferase from Verminephrobacter eiseniae (strain EF01-2).